Here is a 178-residue protein sequence, read N- to C-terminus: Cytochrome b6-f complex iron-sulfur subunit (178 aa).

A helical membrane pass occupies residues 20–42; sequence LLTFGSVTGVALGALYPVANYFI. Positions 65–161 constitute a Rieske domain; the sequence is ASGWLSSHPE…VSVENDNVFV (97 aa). Positions 107, 109, 125, and 128 each coordinate [2Fe-2S] cluster. Cysteine 112 and cysteine 127 are oxidised to a cystine.

It belongs to the Rieske iron-sulfur protein family. The 4 large subunits of the cytochrome b6-f complex are cytochrome b6, subunit IV (17 kDa polypeptide, PetD), cytochrome f and the Rieske protein, while the 4 small subunits are PetG, PetL, PetM and PetN. The complex functions as a dimer. [2Fe-2S] cluster serves as cofactor.

It is found in the cellular thylakoid membrane. The enzyme catalyses 2 oxidized [plastocyanin] + a plastoquinol + 2 H(+)(in) = 2 reduced [plastocyanin] + a plastoquinone + 4 H(+)(out). Component of the cytochrome b6-f complex, which mediates electron transfer between photosystem II (PSII) and photosystem I (PSI), cyclic electron flow around PSI, and state transitions. This chain is Cytochrome b6-f complex iron-sulfur subunit, found in Synechococcus sp. (strain CC9605).